Consider the following 1285-residue polypeptide: Tat-binding homolog 7 (1285 aa).

Disordered stretches follow at residues Met1 to Arg95, Met121 to Arg173, Gly224 to Gln243, and Gln258 to Arg359. Acidic residues-rich tracts occupy residues Glu226–Glu237 and Gln258–Glu270. The segment covering Asn311–Arg325 has biased composition (basic residues). Residue Gly446–Thr453 coordinates ATP. Residues Ala928 to Met1032 form the Bromo domain. Positions Glu1100–Glu1196 are disordered. Over residues Lys1136 to Lys1149 the composition is skewed to basic residues. Acidic residues predominate over residues Pro1155 to Asp1175.

This sequence belongs to the AAA ATPase family.

Functionally, thought to form a complex that enhances transcription from repetitive DNA sequences by modulating chromatin structure. This Caenorhabditis briggsae protein is Tat-binding homolog 7.